Consider the following 458-residue polypeptide: ATP synthase subunit beta (458 aa).

148–155 serves as a coordination point for ATP; the sequence is GGAGVGKT.

This sequence belongs to the ATPase alpha/beta chains family. F-type ATPases have 2 components, CF(1) - the catalytic core - and CF(0) - the membrane proton channel. CF(1) has five subunits: alpha(3), beta(3), gamma(1), delta(1), epsilon(1). CF(0) has three main subunits: a(1), b(2) and c(9-12). The alpha and beta chains form an alternating ring which encloses part of the gamma chain. CF(1) is attached to CF(0) by a central stalk formed by the gamma and epsilon chains, while a peripheral stalk is formed by the delta and b chains.

It localises to the cell inner membrane. It catalyses the reaction ATP + H2O + 4 H(+)(in) = ADP + phosphate + 5 H(+)(out). In terms of biological role, produces ATP from ADP in the presence of a proton gradient across the membrane. The catalytic sites are hosted primarily by the beta subunits. This is ATP synthase subunit beta from Stutzerimonas stutzeri (strain A1501) (Pseudomonas stutzeri).